A 267-amino-acid chain; its full sequence is Interleukin-1 beta (267 aa).

The propeptide occupies 1–115; the sequence is MAPVPELTSE…DTWDDGFVCD (115 aa).

Belongs to the IL-1 family. In terms of assembly, monomer. In its precursor form, weakly interacts with full-length MEFV; the mature cytokine does not interact at all. Interacts with integrins ITGAV:ITGBV and ITGA5:ITGB1; integrin-binding is required for IL1B signaling. Interacts with cargo receptor TMED10; the interaction is direct and is required for the secretion of IL1B mature form. Interacts with HSP90AB1; the interaction facilitates cargo translocation into the ERGIC. Interacts with HSP90B1; the interaction facilitates cargo translocation into the ERGIC.

Its subcellular location is the cytoplasm. It localises to the cytosol. The protein localises to the secreted. It is found in the lysosome. The protein resides in the extracellular exosome. Its function is as follows. Potent pro-inflammatory cytokine. Initially discovered as the major endogenous pyrogen, induces prostaglandin synthesis, neutrophil influx and activation, T-cell activation and cytokine production, B-cell activation and antibody production, and fibroblast proliferation and collagen production. Promotes Th17 differentiation of T-cells. Synergizes with IL12/interleukin-12 to induce IFNG synthesis from T-helper 1 (Th1) cells. Plays a role in angiogenesis by inducing VEGF production synergistically with TNF and IL6. Involved in transduction of inflammation downstream of pyroptosis: its mature form is specifically released in the extracellular milieu by passing through the gasdermin-D (GSDMD) pore. The chain is Interleukin-1 beta (IL1B) from Felis catus (Cat).